The following is a 97-amino-acid chain: Sorbitol dehydrogenase (97 aa).

Cys-44 lines the Zn(2+) pocket. Tyr-50 lines the substrate pocket. Zn(2+) contacts are provided by His-69 and Glu-70.

This sequence belongs to the zinc-containing alcohol dehydrogenase family. As to quaternary structure, homotetramer. The cofactor is Zn(2+).

The protein resides in the mitochondrion membrane. The protein localises to the cell projection. Its subcellular location is the cilium. It localises to the flagellum. It carries out the reaction xylitol + NAD(+) = D-xylulose + NADH + H(+). The catalysed reaction is L-iditol + NAD(+) = keto-L-sorbose + NADH + H(+). It catalyses the reaction keto-D-fructose + NADH + H(+) = D-sorbitol + NAD(+). In terms of biological role, polyol dehydrogenase that catalyzes the reversible NAD(+)-dependent oxidation of various sugar alcohols. Is active with xylitol, L-iditol and D-sorbitol (D-glucitol) as substrates, leading to the C2-oxidized products D-xylulose, L-sorbose and D-fructose, respectively. Is a key enzyme in the polyol pathway that interconverts glucose and fructose via sorbitol, which constitutes an important alternate route for glucose metabolism. May play a role in sperm motility by using sorbitol as an alternative energy source for sperm motility. In Sus scrofa (Pig), this protein is Sorbitol dehydrogenase (SORD).